The following is a 536-amino-acid chain: Probable pectinesterase/pectinesterase inhibitor 59 (536 aa).

Residues 1 to 30 (MNMMMQKLSILFLHLILLVLLCVHPLTTVA) form the signal peptide. The segment at 31–183 (DRNSTDWCDK…SHLISNCLAV (153 aa)) is pectinesterase inhibitor 59. 5 N-linked (GlcNAc...) asparagine glycosylation sites follow: Asn-33, Asn-91, Asn-116, Asn-159, and Asn-195. Positions 221–522 (NLVVAKDGSG…FTVGKFIAGT (302 aa)) are pectinesterase 59. Substrate is bound by residues Thr-298 and Gln-328. The active-site Proton donor; for pectinesterase activity is the Asp-351. Residues Cys-365 and Cys-385 are joined by a disulfide bond. Asp-372 acts as the Nucleophile; for pectinesterase activity in catalysis. Positions 440 and 442 each coordinate substrate.

This sequence in the N-terminal section; belongs to the PMEI family. It in the C-terminal section; belongs to the pectinesterase family. Expressed in siliques.

It localises to the secreted. Its subcellular location is the cell wall. It carries out the reaction [(1-&gt;4)-alpha-D-galacturonosyl methyl ester](n) + n H2O = [(1-&gt;4)-alpha-D-galacturonosyl](n) + n methanol + n H(+). Its pathway is glycan metabolism; pectin degradation; 2-dehydro-3-deoxy-D-gluconate from pectin: step 1/5. Its function is as follows. Acts in the modification of cell walls via demethylesterification of cell wall pectin. The chain is Probable pectinesterase/pectinesterase inhibitor 59 (PME59) from Arabidopsis thaliana (Mouse-ear cress).